The following is a 230-amino-acid chain: UPF0494 membrane protein C1348.07 (230 aa).

The next 3 helical transmembrane spans lie at 78–98 (WPLL…NFEV), 120–140 (IWGP…GLIY), and 148–168 (AIPL…VAMV).

It belongs to the UPF0494 family.

It localises to the vacuole. The protein localises to the membrane. This is UPF0494 membrane protein C1348.07 from Schizosaccharomyces pombe (strain 972 / ATCC 24843) (Fission yeast).